The sequence spans 549 residues: ATP synthase subunit alpha (549 aa).

172–179 provides a ligand contact to ATP; sequence GDRKTGKT. A disordered region spans residues 513–549; it reads SSTGESVVPDEHVEAMDEEDLGKESVKVKKPAPQKKK. Basic residues predominate over residues 540 to 549; sequence VKKPAPQKKK.

This sequence belongs to the ATPase alpha/beta chains family. F-type ATPases have 2 components, CF(1) - the catalytic core - and CF(0) - the membrane proton channel. CF(1) has five subunits: alpha(3), beta(3), gamma(1), delta(1), epsilon(1). CF(0) has three main subunits: a(1), b(2) and c(9-12). The alpha and beta chains form an alternating ring which encloses part of the gamma chain. CF(1) is attached to CF(0) by a central stalk formed by the gamma and epsilon chains, while a peripheral stalk is formed by the delta and b chains.

It is found in the cell membrane. The catalysed reaction is ATP + H2O + 4 H(+)(in) = ADP + phosphate + 5 H(+)(out). Its function is as follows. Produces ATP from ADP in the presence of a proton gradient across the membrane. The alpha chain is a regulatory subunit. This is ATP synthase subunit alpha from Mycobacterium ulcerans (strain Agy99).